The following is a 622-amino-acid chain: Threonine--tRNA ligase (622 aa).

An editing domain region spans residues 1–136; that stretch reads MKTLLIHSDY…PLSELSRKIT (136 aa). Residues 199 to 498 are catalytic; it reads PHVKYIKEKE…TLENKPPALP (300 aa). Zn(2+) contacts are provided by Cys-291, His-343, and His-467.

Belongs to the class-II aminoacyl-tRNA synthetase family. Homodimer. Requires Zn(2+) as cofactor.

It localises to the cytoplasm. It carries out the reaction tRNA(Thr) + L-threonine + ATP = L-threonyl-tRNA(Thr) + AMP + diphosphate + H(+). Functionally, catalyzes the attachment of threonine to tRNA(Thr) in a two-step reaction: L-threonine is first activated by ATP to form Thr-AMP and then transferred to the acceptor end of tRNA(Thr). Also edits incorrectly charged L-seryl-tRNA(Thr). This chain is Threonine--tRNA ligase, found in Methanococcus maripaludis (strain DSM 14266 / JCM 13030 / NBRC 101832 / S2 / LL).